A 234-amino-acid chain; its full sequence is Carboxy-S-adenosyl-L-methionine synthase (234 aa).

Residues Tyr35, Gly60–Ser62, Asp83–Asn84, Asp109–Ile110, Asn124, and Arg191 each bind S-adenosyl-L-methionine.

Belongs to the class I-like SAM-binding methyltransferase superfamily. Cx-SAM synthase family. As to quaternary structure, homodimer.

It carries out the reaction prephenate + S-adenosyl-L-methionine = carboxy-S-adenosyl-L-methionine + 3-phenylpyruvate + H2O. Functionally, catalyzes the conversion of S-adenosyl-L-methionine (SAM) to carboxy-S-adenosyl-L-methionine (Cx-SAM). This Campylobacter hominis (strain ATCC BAA-381 / DSM 21671 / CCUG 45161 / LMG 19568 / NCTC 13146 / CH001A) protein is Carboxy-S-adenosyl-L-methionine synthase.